Here is a 133-residue protein sequence, read N- to C-terminus: Small ribosomal subunit protein uS9 (133 aa).

Residues 97–133 are disordered; sequence MKQELKSQGFLTRDPRKKERKKYGRKKARKSFQFSKR. Over residues 114-133 the composition is skewed to basic residues; that stretch reads KERKKYGRKKARKSFQFSKR.

It belongs to the universal ribosomal protein uS9 family.

The sequence is that of Small ribosomal subunit protein uS9 (rpsI) from Chlamydia muridarum (strain MoPn / Nigg).